Reading from the N-terminus, the 322-residue chain is CMP-sialic acid transporter 1 (322 aa).

Topologically, residues 1-2 (MQ) are cytoplasmic. Residues 3-23 (WYLVAALLTVLTSSQGILTTL) traverse the membrane as a helical segment. Residues 24–33 (SQSNGKYKYD) are Lumenal-facing. Residues 34-54 (YATIPFLAELFKLSFSSFFLW) form a helical membrane-spanning segment. The Cytoplasmic segment spans residues 55-75 (KECQSSSPPRMTKEWRSIRLY). The helical transmembrane segment at 76–96 (LVPSVIYLIHNNVQFATLTYV) threads the bilayer. Topologically, residues 97-100 (DPST) are lumenal. Residues 101–120 (YQIMGNLKIVTTGILFRLVL) traverse the membrane as a helical segment. Over 121 to 126 (KRKLSN) the chain is Cytoplasmic. Residues 127 to 144 (LQWMAVVLLAVGTTTSQV) form a helical membrane-spanning segment. Residues 145–157 (KGCGDAPCDSLFS) are Lumenal-facing. Residues 158-178 (APFQGYMLGILSACLSALAGV) traverse the membrane as a helical segment. Topologically, residues 179–198 (YTEYLMKKNNDSLYWQNVQL) are cytoplasmic. The chain crosses the membrane as a helical span at residues 199-219 (YTFGVIFNMGWLIYGDFKAGF). The Lumenal segment spans residues 220 to 233 (ERGPWWQRLFNGYS). A helical transmembrane segment spans residues 234–254 (ITTWMVVFNLGSTGLLVSWLM). Topologically, residues 255–262 (KYSDNIVK) are cytoplasmic. A helical transmembrane segment spans residues 263–283 (VYSTSMGMLLTMVLSVYLFNV). Topologically, residues 284-286 (RAT) are lumenal.

Belongs to the nucleotide-sugar transporter family. CMP-Sialate:CMP antiporter (TC 2.A.7.12) subfamily.

Its subcellular location is the golgi apparatus membrane. Its function is as follows. Sugar transporter involved in the transport of CMP-sialic acid from the cytoplasm into the Golgi. May transport important nucleotide sugars such as CMP-Kdo (2-keto-3-deoxy-D-manno-octulosonic acid) in physiological conditions. The polypeptide is CMP-sialic acid transporter 1 (Oryza sativa subsp. indica (Rice)).